Consider the following 334-residue polypeptide: Biotin synthase (334 aa).

Residues 54–281 form the Radical SAM core domain; that stretch reads QAIQLSTLLS…KSYVRLSAGR (228 aa). [4Fe-4S] cluster-binding residues include Cys-69, Cys-73, and Cys-76. Positions 113, 144, 204, and 276 each coordinate [2Fe-2S] cluster.

Belongs to the radical SAM superfamily. Biotin synthase family. As to quaternary structure, homodimer. Requires [4Fe-4S] cluster as cofactor. [2Fe-2S] cluster is required as a cofactor.

It carries out the reaction (4R,5S)-dethiobiotin + (sulfur carrier)-SH + 2 reduced [2Fe-2S]-[ferredoxin] + 2 S-adenosyl-L-methionine = (sulfur carrier)-H + biotin + 2 5'-deoxyadenosine + 2 L-methionine + 2 oxidized [2Fe-2S]-[ferredoxin]. Its pathway is cofactor biosynthesis; biotin biosynthesis; biotin from 7,8-diaminononanoate: step 2/2. Catalyzes the conversion of dethiobiotin (DTB) to biotin by the insertion of a sulfur atom into dethiobiotin via a radical-based mechanism. This is Biotin synthase from Haemophilus ducreyi (strain 35000HP / ATCC 700724).